The following is a 188-amino-acid chain: Inosine triphosphate pyrophosphatase (188 aa).

9-14 (TGNAKK) is an ITP binding site. E39 provides a ligand contact to Mg(2+). Residues K51, 67 to 68 (DT), K84, 143 to 146 (FGWD), K166, and 171 to 172 (HR) each bind ITP.

It belongs to the HAM1 NTPase family. In terms of assembly, homodimer. It depends on Mg(2+) as a cofactor. The cofactor is Mn(2+).

It is found in the cytoplasm. The enzyme catalyses ITP + H2O = IMP + diphosphate + H(+). The catalysed reaction is dITP + H2O = dIMP + diphosphate + H(+). It carries out the reaction XTP + H2O = XMP + diphosphate + H(+). Pyrophosphatase that hydrolyzes non-canonical purine nucleotides such as inosine triphosphate (ITP), deoxyinosine triphosphate (dITP) or xanthosine 5'-triphosphate (XTP) to their respective monophosphate derivatives. The enzyme does not distinguish between the deoxy- and ribose forms. Probably excludes non-canonical purines from RNA and DNA precursor pools, thus preventing their incorporation into RNA and DNA and avoiding chromosomal lesions. This Aedes aegypti (Yellowfever mosquito) protein is Inosine triphosphate pyrophosphatase.